A 530-amino-acid polypeptide reads, in one-letter code: Probable flavin-containing monooxygenase 1 (530 aa).

Residues 17–21 (GAGVS), Glu-38, 46–47 (VW), and 58–59 (QS) contribute to the FAD site. Residue 219–222 (SAID) coordinates NADP(+).

This sequence belongs to the FMO family. Requires FAD as cofactor.

Its function is as follows. Required for the establishment of systemic acquired resistance (SAR). Not involved in local defense mechanisms. Confers a salicylic acid-dependent (SA) resistance to virulent pathogens such as P.syringae pv tomato and H.parasitica. This Arabidopsis thaliana (Mouse-ear cress) protein is Probable flavin-containing monooxygenase 1 (FMO1).